A 496-amino-acid polypeptide reads, in one-letter code: 4-O-methyl-glucuronoyl methylesterase 1 (496 aa).

The N-terminal stretch at 1–19 (MKSTVASALLVLAGTAVQA) is a signal peptide. A CBM1 domain is found at 20–55 (QSGPWQQCGGIGWQGPFTCVSGHTCQVLNDWYHQCV). Positions 57-151 (GGGPSPPPTS…RLPDPFTFHN (95 aa)) are disordered. Pro residues predominate over residues 59-125 (GPSPPPTSPP…SPPPTSPPPS (67 aa)). 3 disulfides stabilise this stretch: cysteine 129–cysteine 163, cysteine 307–cysteine 443, and cysteine 339–cysteine 415. Positions 306-311 (GCSRNG) match the GXSYXG catalytic site motif motif. Catalysis depends on serine 308, which acts as the Nucleophile. Substrate contacts are provided by lysine 312, glutamine 354, glutamate 362, and tryptophan 406. The active-site Proton donor/acceptor is histidine 442.

Belongs to the carbohydrate esterase 15 (CE15) family.

It is found in the secreted. It catalyses the reaction a 4-O-methyl-alpha-D-glucuronosyl ester derivative + H2O = 4-O-methyl-alpha-D-glucuronate derivative + an alcohol + H(+). Its function is as follows. Glucuronoyl esterase which may play a significant role in biomass degradation, as it is considered to disconnect hemicellulose from lignin through the hydrolysis of the ester bond between 4-O-methyl-D-glucuronic acid residues of glucuronoxylans and aromatic alcohols of lignin. Cleaves native lignin-carbohydrate (LC) ester bonds from LC complex preparations of spruce (softwood) and birch (hardwood), containing mainly hemicelluloses with partially acetylated glucomannans in spruce and partially acetylated xylan in birch. Can hydrolyze benzyl glucuronic acid (BnGlcA), allyl glucuronic acid (allylGlcA) and to a lower degree methyl glucuronic acid (MeGlcA) in vitro. The sequence is that of 4-O-methyl-glucuronoyl methylesterase 1 from Sodiomyces alcalophilus (Acremonium alcalophilum).